The sequence spans 114 residues: T cell receptor beta variable 28 (114 aa).

The N-terminal stretch at Met1–Ser26 is a signal peptide. The Ig-like domain maps to Ser27–Leu114. Cys42 and Cys110 form a disulfide bridge. An N-linked (GlcNAc...) asparagine glycan is attached at Asn103.

Alpha-beta TR is a heterodimer composed of an alpha and beta chain; disulfide-linked. The alpha-beta TR is associated with the transmembrane signaling CD3 coreceptor proteins to form the TR-CD3 (TcR or TCR). The assembly of alpha-beta TR heterodimers with CD3 occurs in the endoplasmic reticulum where a single alpha-beta TR heterodimer associates with one CD3D-CD3E heterodimer, one CD3G-CD3E heterodimer and one CD247 homodimer forming a stable octameric structure. CD3D-CD3E and CD3G-CD3E heterodimers preferentially associate with TR alpha and TR beta chains, respectively. The association of the CD247 homodimer is the last step of TcR assembly in the endoplasmic reticulum and is required for transport to the cell surface.

It localises to the cell membrane. V region of the variable domain of T cell receptor (TR) beta chain that participates in the antigen recognition. Alpha-beta T cell receptors are antigen specific receptors which are essential to the immune response and are present on the cell surface of T lymphocytes. Recognize peptide-major histocompatibility (MH) (pMH) complexes that are displayed by antigen presenting cells (APC), a prerequisite for efficient T cell adaptive immunity against pathogens. Binding of alpha-beta TR to pMH complex initiates TR-CD3 clustering on the cell surface and intracellular activation of LCK that phosphorylates the ITAM motifs of CD3G, CD3D, CD3E and CD247 enabling the recruitment of ZAP70. In turn ZAP70 phosphorylates LAT, which recruits numerous signaling molecules to form the LAT signalosome. The LAT signalosome propagates signal branching to three major signaling pathways, the calcium, the mitogen-activated protein kinase (MAPK) kinase and the nuclear factor NF-kappa-B (NF-kB) pathways, leading to the mobilization of transcription factors that are critical for gene expression and essential for T cell growth and differentiation. The T cell repertoire is generated in the thymus, by V-(D)-J rearrangement. This repertoire is then shaped by intrathymic selection events to generate a peripheral T cell pool of self-MH restricted, non-autoaggressive T cells. Post-thymic interaction of alpha-beta TR with the pMH complexes shapes TR structural and functional avidity. The polypeptide is T cell receptor beta variable 28 (Homo sapiens (Human)).